The chain runs to 215 residues: Phosphatidylserine decarboxylase proenzyme (215 aa).

S186 functions as the Schiff-base intermediate with substrate; via pyruvic acid in the catalytic mechanism. S186 carries the pyruvic acid (Ser); by autocatalysis modification.

Belongs to the phosphatidylserine decarboxylase family. PSD-A subfamily. Heterodimer of a large membrane-associated beta subunit and a small pyruvoyl-containing alpha subunit. Pyruvate serves as cofactor. Is synthesized initially as an inactive proenzyme. Formation of the active enzyme involves a self-maturation process in which the active site pyruvoyl group is generated from an internal serine residue via an autocatalytic post-translational modification. Two non-identical subunits are generated from the proenzyme in this reaction, and the pyruvate is formed at the N-terminus of the alpha chain, which is derived from the carboxyl end of the proenzyme. The post-translation cleavage follows an unusual pathway, termed non-hydrolytic serinolysis, in which the side chain hydroxyl group of the serine supplies its oxygen atom to form the C-terminus of the beta chain, while the remainder of the serine residue undergoes an oxidative deamination to produce ammonia and the pyruvoyl prosthetic group on the alpha chain.

Its subcellular location is the cell membrane. The enzyme catalyses a 1,2-diacyl-sn-glycero-3-phospho-L-serine + H(+) = a 1,2-diacyl-sn-glycero-3-phosphoethanolamine + CO2. Its pathway is phospholipid metabolism; phosphatidylethanolamine biosynthesis; phosphatidylethanolamine from CDP-diacylglycerol: step 2/2. Catalyzes the formation of phosphatidylethanolamine (PtdEtn) from phosphatidylserine (PtdSer). This chain is Phosphatidylserine decarboxylase proenzyme, found in Pelagibacter ubique (strain HTCC1062).